Reading from the N-terminus, the 135-residue chain is Probable histone H2A.7 (135 aa).

Belongs to the histone H2A family. In terms of assembly, the nucleosome is a histone octamer containing two molecules each of H2A, H2B, H3 and H4 assembled in one H3-H4 heterotetramer and two H2A-H2B heterodimers. The octamer wraps approximately 147 bp of DNA.

Its subcellular location is the nucleus. The protein resides in the chromosome. Its function is as follows. Core component of nucleosome. Nucleosomes wrap and compact DNA into chromatin, limiting DNA accessibility to the cellular machineries which require DNA as a template. Histones thereby play a central role in transcription regulation, DNA repair, DNA replication and chromosomal stability. DNA accessibility is regulated via a complex set of post-translational modifications of histones, also called histone code, and nucleosome remodeling. This Oryza sativa subsp. indica (Rice) protein is Probable histone H2A.7.